We begin with the raw amino-acid sequence, 378 residues long: MLPSFPPAILALADGTVFRGYSIGAAGHTIGEVVFNTAITGYQEILTDPSYSRQIVTLTYPHIGNVGVNREDVEATKVHAAGLIIKDLPILASNFRQEHSLSHYLKGEKVVAIAGIDTRKLTRILREKGAQNGCVLAGEDNPQKAIDLARSFPGLSGMDLAKVVSVTQPYEWNQTEWALGRGYGVQDKPQFHVVAYDFGVKYNILRMLAERGCRVTVVPAQTSAADALAYNPDGVFLSNGPGDPQPCDYAIAATKDFIERRIPTFGICLGHQIMGLAVGGKTLKMKTGHHGANHPVKDLQDGRVIITSQNHGFAVDPESLPANARVTHVSLFDGTLQGFELTDRPAFCFQGHPEASPGPHDIGYLFDRFTAAMAERKQ.

The segment at 1-188 is CPSase; it reads MLPSFPPAIL…LGRGYGVQDK (188 aa). Positions 50, 240, and 242 each coordinate L-glutamine. The 187-residue stretch at 192 to 378 folds into the Glutamine amidotransferase type-1 domain; that stretch reads HVVAYDFGVK…FTAAMAERKQ (187 aa). Cysteine 268 acts as the Nucleophile in catalysis. Residues leucine 269, glutamine 272, asparagine 310, glycine 312, and phenylalanine 313 each contribute to the L-glutamine site. Residues histidine 352 and glutamate 354 contribute to the active site.

Belongs to the CarA family. In terms of assembly, composed of two chains; the small (or glutamine) chain promotes the hydrolysis of glutamine to ammonia, which is used by the large (or ammonia) chain to synthesize carbamoyl phosphate. Tetramer of heterodimers (alpha,beta)4.

It carries out the reaction hydrogencarbonate + L-glutamine + 2 ATP + H2O = carbamoyl phosphate + L-glutamate + 2 ADP + phosphate + 2 H(+). It catalyses the reaction L-glutamine + H2O = L-glutamate + NH4(+). It functions in the pathway amino-acid biosynthesis; L-arginine biosynthesis; carbamoyl phosphate from bicarbonate: step 1/1. It participates in pyrimidine metabolism; UMP biosynthesis via de novo pathway; (S)-dihydroorotate from bicarbonate: step 1/3. Functionally, small subunit of the glutamine-dependent carbamoyl phosphate synthetase (CPSase). CPSase catalyzes the formation of carbamoyl phosphate from the ammonia moiety of glutamine, carbonate, and phosphate donated by ATP, constituting the first step of 2 biosynthetic pathways, one leading to arginine and/or urea and the other to pyrimidine nucleotides. The small subunit (glutamine amidotransferase) binds and cleaves glutamine to supply the large subunit with the substrate ammonia. In Ralstonia nicotianae (strain ATCC BAA-1114 / GMI1000) (Ralstonia solanacearum), this protein is Carbamoyl phosphate synthase small chain.